We begin with the raw amino-acid sequence, 109 residues long: Nucleoid-associated protein VV2410 (109 aa).

The disordered stretch occupies residues 1–22 (MFGKGGMGNLMKQAQQMQERMQ).

This sequence belongs to the YbaB/EbfC family. As to quaternary structure, homodimer.

Its subcellular location is the cytoplasm. It localises to the nucleoid. Binds to DNA and alters its conformation. May be involved in regulation of gene expression, nucleoid organization and DNA protection. This Vibrio vulnificus (strain YJ016) protein is Nucleoid-associated protein VV2410.